The primary structure comprises 1444 residues: MSFASILSGPAEERSPPKRQSPPPETTPAPVTSTPREATQLSPPPPPHVPPSHQKVKEQEQVLPRLEKKPSSEKRRRNAEQDNKAGEPSNGILSNGIPEPTKTTTQSWSFLSPRKVLSERESETINKLMVEIDNAEKSDVEAPGFEEEYEQYKLQCKRRALHTLKEEGIKRKRRRNTFLVNLGKSLEKQASAGMDRFRIANEASVISEVQAKEIQDEKERKKDMQRKRRRENTVRLEMQKKLEAERKANKAQDSAEKAKFLREAERAQRKIKTTKRALEGVTAPEEIGEVTPLAPNLEGGTTSSFHIGRSSPSRRKSGRGGPVTRPKKSKEQKQAEKDAAEAAYAAMENDEPLPLAPKEDPRKESLKKEAKGSRSKESSPAPLSAFETKGYNQIYEQIWRDIARKDIPKVYRIKALSLSTRQENLRKTAQLASKQSRKWQERTNKSMKDTQARAKRTMREMMSFWKRNEREERDLRRLAERQEIESAKKAEAEREANRQRRKLNFLISQTELYSHFIGRKIKGAEGDSGDTAVEGSDETVQPGKDEEHAMEDAGAKVTNFEDLDFDAEDETALRQAAMANAQNAVKEAQDRARAFNDGQDHMAALDEGELNFQNPTSLGDIEISQPTMLTAKLKEYQLKGLNWLVNLYEQGINGILADEMGLGKTIQSISVMAYLAEVHNIWGPFLVIAPASTLHNWQQEITKFVPDIKVLPYWGSAKDRKILRKFWDRKHITYTKESEFHVLVTSYQLVVLDAQYFQKVKWQYMILDEAQAIKSSQSSRWKNLLGFSCRNRLLLTGTPIQNNMQELWALLHFIMPTLFDSHDEFSEWFSKDIESHAQSNTKLNEDQLKRLHMILKPFMLRRVKKHVQQELGDKVEKDVFCDLTYRQRAYYTNLRNRVSIMDLIEKAAVGDEADSTTLMNLVMQFRKVCNHPDLFERAETKSPFSVAHFAETASFVREGQNVDVGYSTRNLIEYPLPRLLCGSDGRVDVAGPGNLHAGFRGKYLAHLMNIFAPENIKHSAEHDGTFSFLRFVDTSINEAYEQSHQGIFERAVRRRGKPNRLSRLNVVYDDDKATMASALPHTMFNIVQRNDQHAINDVTTEGYMRELTTVAQSAFERKGLGIIEPCVSPAASAPPITVSSSSRAPLSEMNDSLFNVSVRHALFSTPSKQLEQQILEKKLDPIPYSLPPMLPQPISIKGRYTHIEVPSMRRFVTDSGKLAKLDELLRELKAGGHRVLLYFQMTRMIDLMEEYLTYRNYKYCRLDGSTKLEDRRDTVADFQQRPEIFVFLLSTRAGGLGINLTAADTVIFYDSDWNPTIDSQAMDRAHRLGQTRQVTVYRLITRGTIEERIRKRALQKEEVQRVVISGGAAGGVDFNTRNRESRTKDIAMWLADDEQAELIEQKEKEALDRGEVFGASKGGKKAAQKRKRDITLDDMYHEVSFAIH.

5 disordered regions span residues 1–115, 215–238, 269–384, 432–454, and 524–551; these read MSFA…SPRK, QDEK…RLEM, RKIK…APLS, ASKQ…QARA, and AEGD…HAME. Residues 29-41 are compositionally biased toward polar residues; the sequence is APVTSTPREATQL. Residues 55 to 85 show a composition bias toward basic and acidic residues; the sequence is KVKEQEQVLPRLEKKPSSEKRRRNAEQDNKA. Positions 101 to 110 are enriched in polar residues; sequence TKTTTQSWSF. Residues 207–283 are a coiled coil; it reads SEVQAKEIQD…TKRALEGVTA (77 aa). Basic and acidic residues-rich tracts occupy residues 329-340, 357-377, and 438-452; these read SKEQKQAEKDAA, PKED…RSKE, and KWQE…DTQA. In terms of domain architecture, DBINO spans 398 to 523; the sequence is IWRDIARKDI…SHFIGRKIKG (126 aa). The stretch at 440-511 forms a coiled coil; sequence QERTNKSMKD…KLNFLISQTE (72 aa). Residues 645–817 enclose the Helicase ATP-binding domain; sequence VNLYEQGING…WALLHFIMPT (173 aa). 658–665 serves as a coordination point for ATP; the sequence is DEMGLGKT. Positions 768 to 771 match the DEAQ box motif; sequence DEAQ. The Helicase C-terminal domain maps to 1220-1380; sequence KLDELLRELK…GVDFNTRNRE (161 aa).

The protein belongs to the SNF2/RAD54 helicase family. In terms of assembly, component of the INO80 chromatin-remodeling complex.

Its subcellular location is the nucleus. The catalysed reaction is ATP + H2O = ADP + phosphate + H(+). In terms of biological role, ATPase component of the INO80 complex which remodels chromatin by shifting nucleosomes and is involved in DNA repair. The protein is Chromatin-remodeling ATPase INO80 (ino80) of Aspergillus oryzae (strain ATCC 42149 / RIB 40) (Yellow koji mold).